The sequence spans 525 residues: Glutamate--cysteine ligase (525 aa).

This sequence belongs to the glutamate--cysteine ligase type 1 family. Type 1 subfamily.

It catalyses the reaction L-cysteine + L-glutamate + ATP = gamma-L-glutamyl-L-cysteine + ADP + phosphate + H(+). It participates in sulfur metabolism; glutathione biosynthesis; glutathione from L-cysteine and L-glutamate: step 1/2. The sequence is that of Glutamate--cysteine ligase from Pseudomonas putida (strain W619).